The primary structure comprises 262 residues: Small ribosomal subunit protein eS4x (262 aa).

The S4 RNA-binding domain maps to 42 to 104 (LPLVLIIRNR…TNENFRLLYD (63 aa)).

The protein belongs to the eukaryotic ribosomal protein eS4 family.

The protein resides in the cytoplasm. The polypeptide is Small ribosomal subunit protein eS4x (RPS4D) (Arabidopsis thaliana (Mouse-ear cress)).